A 77-amino-acid chain; its full sequence is Translation initiation factor IF-1, chloroplastic (77 aa).

The 71-residue stretch at 1–71 (MKEQKWIHEG…TKGRIIYRIR (71 aa)) folds into the S1-like domain.

Belongs to the IF-1 family. As to quaternary structure, component of the 30S ribosomal translation pre-initiation complex which assembles on the 30S ribosome in the order IF-2 and IF-3, IF-1 and N-formylmethionyl-tRNA(fMet); mRNA recruitment can occur at any time during PIC assembly.

The protein resides in the plastid. It is found in the chloroplast. Its function is as follows. One of the essential components for the initiation of protein synthesis. Stabilizes the binding of IF-2 and IF-3 on the 30S subunit to which N-formylmethionyl-tRNA(fMet) subsequently binds. Helps modulate mRNA selection, yielding the 30S pre-initiation complex (PIC). Upon addition of the 50S ribosomal subunit IF-1, IF-2 and IF-3 are released leaving the mature 70S translation initiation complex. The chain is Translation initiation factor IF-1, chloroplastic from Vitis vinifera (Grape).